The sequence spans 547 residues: Myrosinase 2 (547 aa).

Positions 1–28 (MQHNTYIYILTMKLLGFALAILLVVATC) are cleaved as a signal peptide. Intrachain disulfides connect C36-C460, C44-C456, and C236-C244. A beta-D-glucoside contacts are provided by residues Q69, H171, and 216–217 (NQ). N-linked (GlcNAc...) asparagine glycosylation occurs at N340. Y359 is an a beta-D-glucoside binding site. N384 is a glycosylation site (N-linked (GlcNAc...) asparagine). A beta-D-glucoside-binding positions include E430, W479, 486–487 (EF), and F495. E430 acts as the Nucleophile in catalysis. Residue N504 is glycosylated (N-linked (GlcNAc...) asparagine).

Belongs to the glycosyl hydrolase 1 family. In terms of assembly, interacts with MVP1. Expressed in phloem-associated cells.

It catalyses the reaction a thioglucoside + H2O = a sugar + a thiol.. In terms of biological role, may degrade glucosinolates (glucose residue linked by a thioglucoside bound to an amino acid derivative) to glucose, sulfate and any of the products: thiocyanates, isothiocyanates, nitriles, epithionitriles or oxazolidine-2-thiones. These toxic degradation products can deter insect herbivores. Seems to function in abscisic acid (ABA) and methyl jasmonate (MeJA) signaling in guard cells. Functionally redundant with TGG1. In Arabidopsis thaliana (Mouse-ear cress), this protein is Myrosinase 2.